Here is a 536-residue protein sequence, read N- to C-terminus: Cytochrome P450 monooxygenase pbrC (536 aa).

The helical transmembrane segment at 20 to 39 threads the bilayer; sequence VMLPALVGFAFLIYQAFFAI. Cys479 serves as a coordination point for heme.

The protein belongs to the cytochrome P450 family. Requires heme as cofactor.

It localises to the membrane. The protein operates within secondary metabolite biosynthesis; terpenoid biosynthesis. Cytochrome P450 monooxygenase; part of the gene cluster that mediates the biosynthesis of the sesquiterpenoid aspterric acid (AA), an inhibitor of dihydroxy-acid dehydratase (DHAD) effective as an herbicide. PbrC catalyzes the third and last step within the pathway and converts the alpha-epoxy carboxylate intermediate produced by the cytochrome P450 monooxygenase pbrB from (-)daucane into the tricyclic aspterric acid. The chain is Cytochrome P450 monooxygenase pbrC from Penicillium brasilianum.